The sequence spans 112 residues: Small ribosomal subunit protein bS16 (112 aa).

The protein belongs to the bacterial ribosomal protein bS16 family.

The protein is Small ribosomal subunit protein bS16 of Aquifex aeolicus (strain VF5).